The primary structure comprises 176 residues: ATP-dependent protease subunit HslV (176 aa).

The active site involves Thr5. Na(+) is bound by residues Ser161, Cys164, and Thr167.

The protein belongs to the peptidase T1B family. HslV subfamily. In terms of assembly, a double ring-shaped homohexamer of HslV is capped on each side by a ring-shaped HslU homohexamer. The assembly of the HslU/HslV complex is dependent on binding of ATP.

The protein resides in the cytoplasm. It catalyses the reaction ATP-dependent cleavage of peptide bonds with broad specificity.. Its activity is regulated as follows. Allosterically activated by HslU binding. Functionally, protease subunit of a proteasome-like degradation complex believed to be a general protein degrading machinery. This is ATP-dependent protease subunit HslV from Desulfitobacterium hafniense (strain DSM 10664 / DCB-2).